Reading from the N-terminus, the 201-residue chain is Small ribosomal subunit protein uS4B (201 aa).

The 64-residue stretch at 93-156 (QRLDTVVYRL…RSLAVVRESL (64 aa)) folds into the S4 RNA-binding domain.

It belongs to the universal ribosomal protein uS4 family. Part of the 30S ribosomal subunit. Contacts protein S5. The interaction surface between S4 and S5 is involved in control of translational fidelity.

Functionally, one of the primary rRNA binding proteins, it binds directly to 16S rRNA where it nucleates assembly of the body of the 30S subunit. In terms of biological role, with S5 and S12 plays an important role in translational accuracy. This is Small ribosomal subunit protein uS4B from Symbiobacterium thermophilum (strain DSM 24528 / JCM 14929 / IAM 14863 / T).